The following is a 408-amino-acid chain: Arginine biosynthesis bifunctional protein ArgJ (408 aa).

Positions 158, 184, 195, 281, 403, and 408 each coordinate substrate. The Nucleophile role is filled by threonine 195.

Belongs to the ArgJ family. Heterotetramer of two alpha and two beta chains.

The protein localises to the cytoplasm. The enzyme catalyses N(2)-acetyl-L-ornithine + L-glutamate = N-acetyl-L-glutamate + L-ornithine. It catalyses the reaction L-glutamate + acetyl-CoA = N-acetyl-L-glutamate + CoA + H(+). The protein operates within amino-acid biosynthesis; L-arginine biosynthesis; L-ornithine and N-acetyl-L-glutamate from L-glutamate and N(2)-acetyl-L-ornithine (cyclic): step 1/1. Its pathway is amino-acid biosynthesis; L-arginine biosynthesis; N(2)-acetyl-L-ornithine from L-glutamate: step 1/4. Catalyzes two activities which are involved in the cyclic version of arginine biosynthesis: the synthesis of N-acetylglutamate from glutamate and acetyl-CoA as the acetyl donor, and of ornithine by transacetylation between N(2)-acetylornithine and glutamate. The polypeptide is Arginine biosynthesis bifunctional protein ArgJ (Bacillus cereus (strain ATCC 14579 / DSM 31 / CCUG 7414 / JCM 2152 / NBRC 15305 / NCIMB 9373 / NCTC 2599 / NRRL B-3711)).